The sequence spans 163 residues: Ribosome maturation factor RimM (163 aa).

One can recognise a PRC barrel domain in the interval proline 92–phenylalanine 161.

This sequence belongs to the RimM family. Binds ribosomal protein uS19.

Its subcellular location is the cytoplasm. Functionally, an accessory protein needed during the final step in the assembly of 30S ribosomal subunit, possibly for assembly of the head region. Essential for efficient processing of 16S rRNA. May be needed both before and after RbfA during the maturation of 16S rRNA. It has affinity for free ribosomal 30S subunits but not for 70S ribosomes. This is Ribosome maturation factor RimM from Sphingopyxis alaskensis (strain DSM 13593 / LMG 18877 / RB2256) (Sphingomonas alaskensis).